A 67-amino-acid chain; its full sequence is U-myrmeciitoxin(01)-Mg4a (67 aa).

A signal peptide spans 1 to 25 (MGKVFFFVLMIAIIGSTFLIEEALG).

Belongs to the ant myrmeciitoxin-01 family. Homodimer; disulfide-linked. Contains 2 intrachain disulfide bonds (one per chain) and 1 interchain disulfide bond. In terms of tissue distribution, expressed by the venom gland.

The protein resides in the secreted. The sequence is that of U-myrmeciitoxin(01)-Mg4a from Myrmecia gulosa (Red bulldog ant).